A 377-amino-acid chain; its full sequence is MSNGIVIIGSGFAARQLVKNIRKQDATIPLTLIAADSMDEYNKPDLSHVISQGQRADDLTRQTAGEFAEQFNLRLFPHTWVTDIDAEARVVKSQNNQWQYDKLVLATGASAFVPPVPGRELMLTLNSQQEYRACETQLRDARRVLIVGGGLIGSELAMDFCRAGKAVTLIDNAASILASLMPPEVSSRLQHRLTEMGVHLLLKSQLQGLEKTDSGILATLDRQRSIEVDAVIAATGLRPETALARRAGLTINRGVCVDSYLQTRNADIYALGDCAEINGQVLPFLQPIQLSAMVLAKNLLGNNTPLKLPAMLVKIKTPELPLHLAGETQRRDLRWQICTESQGMVARGVDGADQLRAFVVSEDRMKEAFGLLKTLPM.

Belongs to the FAD-dependent oxidoreductase family. FAD serves as cofactor.

The protein localises to the cytoplasm. It catalyses the reaction 2 reduced [nitric oxide reductase rubredoxin domain] + NAD(+) + H(+) = 2 oxidized [nitric oxide reductase rubredoxin domain] + NADH. Its pathway is nitrogen metabolism; nitric oxide reduction. One of at least two accessory proteins for anaerobic nitric oxide (NO) reductase. Reduces the rubredoxin moiety of NO reductase. The sequence is that of Nitric oxide reductase FlRd-NAD(+) reductase from Escherichia coli (strain SE11).